We begin with the raw amino-acid sequence, 196 residues long: N-(5'-phosphoribosyl)anthranilate isomerase (196 aa).

This sequence belongs to the TrpF family.

It carries out the reaction N-(5-phospho-beta-D-ribosyl)anthranilate = 1-(2-carboxyphenylamino)-1-deoxy-D-ribulose 5-phosphate. It functions in the pathway amino-acid biosynthesis; L-tryptophan biosynthesis; L-tryptophan from chorismate: step 3/5. This Nitratiruptor sp. (strain SB155-2) protein is N-(5'-phosphoribosyl)anthranilate isomerase.